The sequence spans 411 residues: Lissencephaly-1 homolog (411 aa).

The 33-residue stretch at 9–41 (QREELNQAIADYLGSNGYGDSLETFRKEADVST) folds into the LisH domain. Residues 56-83 (TSVIRLQKKVMELEAKLTEAEKEVIEGA) adopt a coiled-coil conformation. WD repeat units follow at residues 106 to 147 (GHRA…RSLK), 148 to 187 (GHTD…ECVK), 191 to 230 (GHDH…CVKT), 233 to 272 (GHRE…CKVE), 275 to 334 (DHEH…CLLT), 337 to 376 (GHDN…CMKT), and 379 to 411 (AHQH…WECR).

Belongs to the WD repeat LIS1/nudF family.

It localises to the cytoplasm. The protein resides in the cytoskeleton. Its subcellular location is the microtubule organizing center. The protein localises to the centrosome. Positively regulates the activity of the minus-end directed microtubule motor protein dynein. May enhance dynein-mediated microtubule sliding by targeting dynein to the microtubule plus end. Required for several dynein- and microtubule-dependent processes. In Drosophila persimilis (Fruit fly), this protein is Lissencephaly-1 homolog.